Reading from the N-terminus, the 811-residue chain is MRMIQRERKREKEEGQLKERTVVNMADPDDNEAEATGLQQYSGETTRDDNEESMNDSFTLTSRNRGRSNTISSIVSGYEIMKEHMDKEKFMYLILASLLLYMGFVAAFAPRTSLSRDFRRFHSSRLTNAEVYRIYLNSLQQENRAKEHVYKYAGYMSNGASDSSTFKYTLDEFLDMGYKPKVEKYYPWIGEPVDTNVAPLENGKVVYEASMIEDRVKGDPASHARKRQKGFHQYSKNGSVTARYVFCNYGSISDYKLLLKKNIDIEDKIHIVRSGKILPGLKVKNAELYGASSVIIYTDPFDDGKVTEENGFLHYPYGPARNPSYIRRDSVNYFSDTPGDPTTPGYPSKDSDTEHMSPVGRVPRIPSVPMSARDVQPILERLNGRGFQIGPGSNIKDFGSFTGPSSSIDKVHLHNELTYNIKEMSSVEVSIPGIFTEGEIIIGAHRDSLASSSAGDANSGSAILLEIARGMSKLLKHGWKPLRPIKLISWDGERSGLLGSTDYAEAHAAILRRRALVYLNLDNAISGTNFHCKANPLLQDVIYEAAKLTEFNGHEDWSLFDHWKYTSNATISLLDGLSSYTSFQYHLGVPAAHFQFNANDTSGAVYHSNSVFDSPTWLEKFTNSDYKLHNTMAMFVGLTTLMLSENELARFNTHVYLKKIYNWYIAWHSNLSSAFPQDDEVNSLAKRVLDLLKVATQEDSIQFDQQNGILYKECREALPVWAFYKKIKSYIKLQRSNSKSKQIDQLFITHRGLKDREWMKYSLLAPSKFEGSVGEVLPGLHEGLADIDRNEVIQWLTILLSQFSNVRYLLQ.

The segment covering 1–21 (MRMIQRERKREKEEGQLKERT) has biased composition (basic and acidic residues). The disordered stretch occupies residues 1–63 (MRMIQRERKR…MNDSFTLTSR (63 aa)). N55 carries an N-linked (GlcNAc...) asparagine glycan. Residues 90-110 (FMYLILASLLLYMGFVAAFAP) form a helical membrane-spanning segment. An N-linked (GlcNAc...) asparagine glycan is attached at N237. The tract at residues 334–367 (FSDTPGDPTTPGYPSKDSDTEHMSPVGRVPRIPS) is disordered. A compositionally biased stretch (low complexity) spans 336–345 (DTPGDPTTPG). Zn(2+) contacts are provided by H445, D456, and D522. N568 and N599 each carry an N-linked (GlcNAc...) asparagine glycan. H607 provides a ligand contact to Zn(2+). N670 is a glycosylation site (N-linked (GlcNAc...) asparagine).

Belongs to the peptidase M28 family. M28B subfamily. The cofactor is Zn(2+).

The protein resides in the membrane. Functionally, involved in vacuolar protein sorting. This Saccharomyces cerevisiae (strain ATCC 204508 / S288c) (Baker's yeast) protein is Vacuolar protein sorting-associated protein 70 (VPS70).